A 204-amino-acid chain; its full sequence is Large ribosomal subunit protein eL15 (204 aa).

It belongs to the eukaryotic ribosomal protein eL15 family. Component of the large ribosomal subunit.

Its subcellular location is the cytoplasm. Functionally, component of the large ribosomal subunit. The ribosome is a large ribonucleoprotein complex responsible for the synthesis of proteins in the cell. The chain is Large ribosomal subunit protein eL15 (rpl15) from Paramisgurnus dabryanus.